Consider the following 128-residue polypeptide: Small ribosomal subunit protein uS9 (128 aa).

The segment at Asp105 to Arg128 is disordered. Residues Pro114–Arg128 show a composition bias toward basic residues.

The protein belongs to the universal ribosomal protein uS9 family.

The protein is Small ribosomal subunit protein uS9 of Bacteroides thetaiotaomicron (strain ATCC 29148 / DSM 2079 / JCM 5827 / CCUG 10774 / NCTC 10582 / VPI-5482 / E50).